A 516-amino-acid chain; its full sequence is L-amino-acid oxidase (516 aa).

The N-terminal stretch at 1-18 (MNVFFMFSLLFLAALGSC) is a signal peptide. Cysteine 28 and cysteine 189 are disulfide-bonded. FAD is bound by residues 61–62 (MS), 81–82 (EA), arginine 89, and 103–106 (GPMR). 2 residues coordinate substrate: arginine 106 and histidine 239. Residue valine 279 participates in FAD binding. Cysteine 349 and cysteine 430 are disulfide-bonded. Asparagine 379 is a glycosylation site (N-linked (GlcNAc...) asparagine). Tyrosine 390 contributes to the substrate binding site. FAD is bound by residues glutamate 475 and 482–487 (GWIDST). 482-483 (GW) is a substrate binding site.

The protein belongs to the flavin monoamine oxidase family. FIG1 subfamily. In terms of assembly, homodimer; non-covalently linked. The cofactor is FAD. In terms of processing, N-glycosylated. Expressed by the venom gland.

The protein localises to the secreted. It catalyses the reaction an L-alpha-amino acid + O2 + H2O = a 2-oxocarboxylate + H2O2 + NH4(+). Functionally, catalyzes an oxidative deamination of predominantly hydrophobic and aromatic L-amino acids, thus producing hydrogen peroxide that may contribute to the diverse toxic effects of this enzyme. Exhibits diverse biological activities, such as hemorrhage, hemolysis, edema, apoptosis of vascular endothelial cells or tumor cell lines, antibacterial and antiparasitic activities, as well as regulation of platelet aggregation. Effects of snake L-amino oxidases on platelets are controversial, since they either induce aggregation or inhibit agonist-induced aggregation. These different effects are probably due to different experimental conditions. This is L-amino-acid oxidase from Sistrurus catenatus edwardsii (Desert massasauga).